A 527-amino-acid chain; its full sequence is Catalase (527 aa).

At Ala2 the chain carries N-acetylalanine. At Ser9 the chain carries Phosphoserine. Active-site residues include His75 and Asn148. Residues His194, Ser201, Arg203, and Asn213 each contribute to the NADP(+) site. Lys221 is subject to N6-succinyllysine. Lys233 is modified (N6-acetyllysine). Residues Lys237, Trp303, His305, and Lys306 each coordinate NADP(+). N6-acetyllysine; alternate is present on Lys306. Residue Lys306 is modified to N6-succinyllysine; alternate. Tyr358 provides a ligand contact to heme. A phosphoserine mark is found at Ser417 and Ser422. N6-acetyllysine; alternate is present on Lys480. At Lys480 the chain carries N6-succinyllysine; alternate. An N6-acetyllysine modification is found at Lys499. Position 511 is a phosphothreonine (Thr511). Phosphoserine occurs at positions 515 and 517. A Microbody targeting signal; atypical motif is present at residues 524–527 (KANL).

It belongs to the catalase family. As to quaternary structure, homotetramer. Interacts (via microbody targeting signal) with PEX5, monomeric form interacts with PEX5, leading to its translocation into peroxisomes. Heme is required as a cofactor. Requires NADP(+) as cofactor.

The protein resides in the peroxisome matrix. It catalyses the reaction 2 H2O2 = O2 + 2 H2O. Its function is as follows. Catalyzes the degradation of hydrogen peroxide (H(2)O(2)) generated by peroxisomal oxidases to water and oxygen, thereby protecting cells from the toxic effects of hydrogen peroxide. Promotes growth of cells including T-cells, B-cells, myeloid leukemia cells, melanoma cells, mastocytoma cells and normal and transformed fibroblast cells. In Homo sapiens (Human), this protein is Catalase (CAT).